Here is a 369-residue protein sequence, read N- to C-terminus: Serpentine receptor class epsilon-2 (369 aa).

Residues 1–20 (MLIQYHKISNNDPNRIQLLS) lie on the Extracellular side of the membrane. The chain crosses the membrane as a helical span at residues 21 to 41 (MIFCEIILLIFELFEFAAIIF). Topologically, residues 42–55 (NMSRYQFHFNLKVV) are cytoplasmic. The chain crosses the membrane as a helical span at residues 56–76 (VGYAIFAYWFDIIARITIAFF). The Extracellular portion of the chain corresponds to 77-118 (EIGLFNLDDQTIAVETEKLPWNYKNMFFMLLFCCSTYRVYFM). The helical transmembrane segment at 119 to 139 (FLICSVTLLLAVERFLATIWV) threads the bilayer. Over 140-148 (STYESVQHK) the chain is Cytoplasmic. A helical transmembrane segment spans residues 149–169 (WVSIVLTSTNSIAGIFGSLLF). At 170–178 (HYELIFDTA) the chain is on the extracellular side. The helical transmembrane segment at 179–199 (VWCSLGLCFNFVSIFLYVILF) threads the bilayer. Over 200–234 (NSNKSKIELCQTREITQSYTLSLRFQLNENLKIMN) the chain is Cytoplasmic. Residues 235–255 (WIKNSILVVTCFNTLLAGFLI) form a helical membrane-spanning segment. The Extracellular segment spans residues 256 to 274 (ASNNEYLKNDYPVLVKCCH). Residues 275–295 (TFLNLGIAIYAQVVFFVAILA) form a helical membrane-spanning segment. Topologically, residues 296–369 (DRHFRTYFLR…VAKKKRFWRV (74 aa)) are cytoplasmic.

This sequence belongs to the nematode receptor-like protein sre family.

The protein localises to the cell membrane. In Caenorhabditis elegans, this protein is Serpentine receptor class epsilon-2 (sre-2).